Reading from the N-terminus, the 364-residue chain is Anthranilate phosphoribosyltransferase (364 aa).

Polar residues predominate over residues 1–10; sequence MTSGPSQPFP. Residues 1–22 are disordered; that stretch reads MTSGPSQPFPSASGPDDGPSWP. 5-phospho-alpha-D-ribose 1-diphosphate is bound by residues glycine 101, 104 to 105, threonine 109, 111 to 114, 129 to 137, and glycine 141; these read GD, NLST, and KHGNRAASS. Glycine 101 contacts anthranilate. Residue serine 113 coordinates Mg(2+). An anthranilate-binding site is contributed by asparagine 132. Residue arginine 187 coordinates anthranilate. Mg(2+)-binding residues include aspartate 245 and glutamate 246.

Belongs to the anthranilate phosphoribosyltransferase family. As to quaternary structure, homodimer. Mg(2+) is required as a cofactor.

It carries out the reaction N-(5-phospho-beta-D-ribosyl)anthranilate + diphosphate = 5-phospho-alpha-D-ribose 1-diphosphate + anthranilate. Its pathway is amino-acid biosynthesis; L-tryptophan biosynthesis; L-tryptophan from chorismate: step 2/5. Catalyzes the transfer of the phosphoribosyl group of 5-phosphorylribose-1-pyrophosphate (PRPP) to anthranilate to yield N-(5'-phosphoribosyl)-anthranilate (PRA). The protein is Anthranilate phosphoribosyltransferase of Mycolicibacterium smegmatis (strain ATCC 700084 / mc(2)155) (Mycobacterium smegmatis).